The sequence spans 238 residues: Putative pectate lyase X (238 aa).

The signal sequence occupies residues M1–A22. Residues D153, E188, and D192 each contribute to the Ca(2+) site.

This sequence belongs to the polysaccharide lyase 1 family. Requires Ca(2+) as cofactor.

The enzyme catalyses Eliminative cleavage of (1-&gt;4)-alpha-D-galacturonan to give oligosaccharides with 4-deoxy-alpha-D-galact-4-enuronosyl groups at their non-reducing ends.. The protein operates within glycan metabolism; pectin degradation; 2-dehydro-3-deoxy-D-gluconate from pectin: step 2/5. Involved in maceration and soft-rotting of plant tissue. The polypeptide is Putative pectate lyase X (PEL X) (Pectobacterium carotovorum (Erwinia carotovora)).